The following is a 324-amino-acid chain: MKVEELPFSLEQLRILKAIATEGSFKKAAESLYMTQPAISLQIQTLEKKLNIALFDRSGRRALMTEAGHLLLRYGDCILALCEETCHALEDLRNLQGGTLVIGASQTTGTYLMPRLIGLFRQRYPQVTVKLHVHSTRRISWNIANGQVDLAVIGGEVPHELQESLTITPYAEDELVLILPKSHPFAKLESIQKEDLYRLKFIALDAQSAIRKVIDKVLAQNGIDSNLFRVEMELNSIESIKNAVQSGLGAAFVSVSAIAKELELGILHWCRIENITIKRMLSIITNPNRYHSQAARIFSEEILTMFSLQSPEVKKRALSIIQNT.

One can recognise an HTH lysR-type domain in the interval 8-65 (FSLEQLRILKAIATEGSFKKAAESLYMTQPAISLQIQTLEKKLNIALFDRSGRRALMT). Positions 25–44 (FKKAAESLYMTQPAISLQIQ) form a DNA-binding region, H-T-H motif.

This sequence belongs to the LysR transcriptional regulatory family.

The protein localises to the plastid. It localises to the cyanelle. In terms of biological role, trans-acting transcriptional regulator of RuBisCO genes (rbcL and rbcS) expression. The protein is Probable RuBisCO transcriptional regulator (rbcR) of Cyanophora paradoxa.